The following is a 455-amino-acid chain: Dihydrolipoyllysine-residue succinyltransferase component of 2-oxoglutarate dehydrogenase complex, mitochondrial (455 aa).

The transit peptide at 1-68 directs the protein to the mitochondrion; the sequence is MLSRSRCVSR…RFFRTTAVCK (68 aa). The Lipoyl-binding domain maps to 71–145; the sequence is VITVKTPAFA…EGGTPLFTLR (75 aa). Residue serine 82 is modified to Phosphoserine. Lysine 111 carries the N6-lipoyllysine modification. Over residues 153 to 173 the composition is skewed to low complexity; that stretch reads KAKPAEAPAAAAPKAEPAVSA. The tract at residues 153-214 is disordered; the sequence is KAKPAEAPAA…KPTAAPPVAE (62 aa). Lysine 155 bears the N6-acetyllysine mark. Over residues 174–195 the composition is skewed to pro residues; the sequence is VPPPPAASIPTQMPPVPSPPQP. The catalytic stretch occupies residues 221–453; sequence LRAEHREKMN…AVEDPRVLLL (233 aa). N6-acetyllysine occurs at positions 269, 274, 275, 279, and 309. Active-site residues include histidine 426 and aspartate 430.

It belongs to the 2-oxoacid dehydrogenase family. As to quaternary structure, the 2-oxoglutarate dehydrogenase complex is composed of OGDH (2-oxoglutarate dehydrogenase; E1), DLST (dihydrolipoamide succinyltransferase; E2), DLD (dihydrolipoamide dehydrogenase; E3) and the assembly factor KGD4. It contains multiple copies of the three enzymatic components (E1, E2 and E3). In the nucleus, the 2-oxoglutarate dehydrogenase complex associates with KAT2A. Interacts with ABHD11; this interaction maintains the functional lipoylation of the 2-oxoglutarate dehydrogenase complex. The cofactor is (R)-lipoate.

It is found in the mitochondrion matrix. The protein resides in the nucleus. The enzyme catalyses N(6)-[(R)-dihydrolipoyl]-L-lysyl-[protein] + succinyl-CoA = N(6)-[(R)-S(8)-succinyldihydrolipoyl]-L-lysyl-[protein] + CoA. The protein operates within amino-acid degradation; L-lysine degradation via saccharopine pathway; glutaryl-CoA from L-lysine: step 6/6. Its pathway is carbohydrate metabolism; tricarboxylic acid cycle. In terms of biological role, dihydrolipoamide succinyltransferase (E2) component of the 2-oxoglutarate dehydrogenase complex. The 2-oxoglutarate dehydrogenase complex catalyzes the overall conversion of 2-oxoglutarate to succinyl-CoA and CO(2). The 2-oxoglutarate dehydrogenase complex is mainly active in the mitochondrion. A fraction of the 2-oxoglutarate dehydrogenase complex also localizes in the nucleus and is required for lysine succinylation of histones: associates with KAT2A on chromatin and provides succinyl-CoA to histone succinyltransferase KAT2A. This is Dihydrolipoyllysine-residue succinyltransferase component of 2-oxoglutarate dehydrogenase complex, mitochondrial from Sus scrofa (Pig).